A 431-amino-acid polypeptide reads, in one-letter code: Cyclic GMP-AMP synthase-like receptor (431 aa).

ATP contacts are provided by residues serine 73 and 85-87 (EFD). Residues glutamate 85, aspartate 87, and aspartate 212 each coordinate Mg(2+). Aspartate 212 contacts GTP. ATP is bound by residues lysine 290 and 304 to 308 (SYALK). Residue glutamate 316 participates in Mn(2+) binding.

It belongs to the mab-21 family. It depends on Mg(2+) as a cofactor. Requires Mn(2+) as cofactor.

The enzyme catalyses GTP + ATP = 2',3'-cGAMP + 2 diphosphate. It catalyses the reaction GTP + ATP = pppGp(2'-5')A + diphosphate. The catalysed reaction is pppGp(2'-5')A = 2',3'-cGAMP + diphosphate. In terms of biological role, nucleotidyltransferase that catalyzes the formation of cyclic GMP-AMP (2',3'-cGAMP) from ATP and GTP and plays a key role in innate immunity. Acts as a key sensor of double-stranded RNA (dsRNA), the presence of dsRNA in the cytoplasm being a danger signal that triggers the immune responses. Directly binds dsRNA, activating the nucleotidyltransferase activity, leading to synthesis of 2',3'-cGAMP, a second messenger that binds to and activates Sting, thereby triggering the immune response via activation of the NF-kappa-B transcription factor. This Frankliniella occidentalis (Western flower thrips) protein is Cyclic GMP-AMP synthase-like receptor.